Here is a 379-residue protein sequence, read N- to C-terminus: Anhydro-N-acetylmuramic acid kinase (379 aa).

9 to 16 (GTSVDGID) contacts ATP.

The protein belongs to the anhydro-N-acetylmuramic acid kinase family.

The enzyme catalyses 1,6-anhydro-N-acetyl-beta-muramate + ATP + H2O = N-acetyl-D-muramate 6-phosphate + ADP + H(+). It participates in amino-sugar metabolism; 1,6-anhydro-N-acetylmuramate degradation. Its pathway is cell wall biogenesis; peptidoglycan recycling. Functionally, catalyzes the specific phosphorylation of 1,6-anhydro-N-acetylmuramic acid (anhMurNAc) with the simultaneous cleavage of the 1,6-anhydro ring, generating MurNAc-6-P. Is required for the utilization of anhMurNAc either imported from the medium or derived from its own cell wall murein, and thus plays a role in cell wall recycling. The polypeptide is Anhydro-N-acetylmuramic acid kinase (Picosynechococcus sp. (strain ATCC 27264 / PCC 7002 / PR-6) (Agmenellum quadruplicatum)).